Reading from the N-terminus, the 244-residue chain is Carbonyl reductase [NADPH] 2 (244 aa).

11-39 (LVTGAGKGIGRDTVKALHASGAKVVAVTR) lines the NADP(+) pocket. Ser42 carries the phosphoserine modification. Ser136 serves as a coordination point for substrate. Tyr149 serves as the catalytic Proton acceptor. Ser176 bears the Phosphoserine mark.

This sequence belongs to the short-chain dehydrogenases/reductases (SDR) family. Homotetramer. In terms of tissue distribution, predominantly expressed in lung, in ciliated cells, non-ciliated bronchiolar cells and type-II alveolar pneumocytes. Also detected in adipose tissue (at protein level). Low expression in testis, heart, kidney, spleen, brain and liver.

The protein localises to the mitochondrion matrix. The catalysed reaction is a secondary alcohol + NADP(+) = a ketone + NADPH + H(+). In terms of biological role, may function in the pulmonary metabolism of endogenous carbonyl compounds, such as aliphatic aldehydes and ketones derived from lipid peroxidation, 3-ketosteroids and fatty aldehydes, as well as in xenobiotic metabolism. This chain is Carbonyl reductase [NADPH] 2 (Cbr2), found in Mus musculus (Mouse).